The chain runs to 54 residues: Photosystem II reaction center protein L (54 aa).

The chain crosses the membrane as a helical span at residues 33–53 (SLFWGLLLIFVLAVLFSSYIF).

The protein belongs to the PsbL family. As to quaternary structure, PSII is composed of 1 copy each of membrane proteins PsbA, PsbB, PsbC, PsbD, PsbE, PsbF, PsbH, PsbI, PsbJ, PsbK, PsbL, PsbM, PsbT, PsbX, PsbY, PsbZ, Psb30/Ycf12, at least 3 peripheral proteins of the oxygen-evolving complex and a large number of cofactors. It forms dimeric complexes.

The protein localises to the plastid. It is found in the chloroplast thylakoid membrane. In terms of biological role, one of the components of the core complex of photosystem II (PSII). PSII is a light-driven water:plastoquinone oxidoreductase that uses light energy to abstract electrons from H(2)O, generating O(2) and a proton gradient subsequently used for ATP formation. It consists of a core antenna complex that captures photons, and an electron transfer chain that converts photonic excitation into a charge separation. This subunit is found at the monomer-monomer interface and is required for correct PSII assembly and/or dimerization. This Stigeoclonium helveticum (Green alga) protein is Photosystem II reaction center protein L.